Reading from the N-terminus, the 401-residue chain is Probable 2,3-bisphosphoglycerate-independent phosphoglycerate mutase (401 aa).

It belongs to the BPG-independent phosphoglycerate mutase family. A-PGAM subfamily.

It catalyses the reaction (2R)-2-phosphoglycerate = (2R)-3-phosphoglycerate. It functions in the pathway carbohydrate degradation; glycolysis; pyruvate from D-glyceraldehyde 3-phosphate: step 3/5. In terms of biological role, catalyzes the interconversion of 2-phosphoglycerate and 3-phosphoglycerate. The chain is Probable 2,3-bisphosphoglycerate-independent phosphoglycerate mutase from Thermotoga petrophila (strain ATCC BAA-488 / DSM 13995 / JCM 10881 / RKU-1).